The chain runs to 545 residues: Chromosomal replication initiator protein DnaA (545 aa).

Residues M1–P72 are domain I, interacts with DnaA modulators. Residues P72–S208 are domain II. Over residues A90–G105 the composition is skewed to low complexity. Disordered regions lie at residues A90–G112 and A181–M204. Polar residues predominate over residues P189 to T201. The domain III, AAA+ region stretch occupies residues K209–S425. The ATP site is built by G253, G255, K256, and T257. A domain IV, binds dsDNA region spans residues K426 to G545.

This sequence belongs to the DnaA family. Oligomerizes as a right-handed, spiral filament on DNA at oriC.

Its subcellular location is the cytoplasm. Its function is as follows. Plays an essential role in the initiation and regulation of chromosomal replication. ATP-DnaA binds to the origin of replication (oriC) to initiate formation of the DNA replication initiation complex once per cell cycle. Binds the DnaA box (a 9 base pair repeat at the origin) and separates the double-stranded (ds)DNA. Forms a right-handed helical filament on oriC DNA; dsDNA binds to the exterior of the filament while single-stranded (ss)DNA is stabiized in the filament's interior. The ATP-DnaA-oriC complex binds and stabilizes one strand of the AT-rich DNA unwinding element (DUE), permitting loading of DNA polymerase. After initiation quickly degrades to an ADP-DnaA complex that is not apt for DNA replication. Binds acidic phospholipids. This chain is Chromosomal replication initiator protein DnaA, found in Paraburkholderia phytofirmans (strain DSM 17436 / LMG 22146 / PsJN) (Burkholderia phytofirmans).